Reading from the N-terminus, the 733-residue chain is MSLKNEEQNDLSPKDSVKGNDQYRAPSGIHLEREEESRNDFWQFEPSNLFRHPRIHLEPQEKSDNNFKKFVIKKLEKSCQCSSTKAKNTIFGFLPVLQWLPKYDLKKNILGDVMSGLIVGILLVPQSIAYSLLAGQEPIYGLYTSFFASLIYFILGTSRHISVGIFGILCLMIGEVVDRELYIAGYDAVHAASNESSLVNQMPDKTCDRSCYAIIVGSTVTFVAGVYQVAMGFFQVGFVSVYLSDALLGGFVTGASFTILTSQVKYLLGLSLPRSAGVGSLITTWIHVFRNIHKTNICDLITSLLCLLVLLPTKELNERFKSKLKAPIPVELFVVVAATLASHFGKLNEKYGTSIAGHIPTGFMPPEAPDWNLIPRVAIDAIAIAIIGFAITVSLSEMFAKKHGYTVKANQEMYAIGFCNIIPSFFHCFTTSAALAKTLVKESTGCQTQVSGVMTALVLLLVLLVIAPLFFSLQKSVLGVITIVNLRGALCKFKDLPQMWRISRMDTVIWFVTMLSSALISTEIGLLTGVCFSMFCVILRTQKPKASLLGLVEDSEVFESMSAYKNLQAKSGIKIFRFVAPLYYVNKEYFKSVLYKKTLNPVLVKAAQRKAAKRKIKRETVTPSGIQDEVSVQLSHDPLEFHTIVIDCSAIQFLDTAGIHTLKEVRRDYEAIGIQVLLAQCNPSVRTPGRGEYCKKDEENLLFYSVYEAMTFAEDSQNQKETYVPNGPNFSSD.

A compositionally biased stretch (basic and acidic residues) spans 1–18 (MSLKNEEQNDLSPKDSVK). Positions 1–37 (MSLKNEEQNDLSPKDSVKGNDQYRAPSGIHLEREEES) are disordered. 2 positions are modified to phosphoserine: Ser-12 and Ser-16. Transmembrane regions (helical) follow at residues 113–133 (VMSG…YSLL) and 138–158 (PIYG…LGTS). The N-linked (GlcNAc...) asparagine glycan is linked to Asn-194. 6 helical membrane passes run 214 to 234 (IIVG…MGFF), 237 to 257 (GFVS…GASF), 379 to 399 (IDAI…SEMF), 415 to 435 (AIGF…SAAL), 453 to 473 (VMTA…FFSL), and 519 to 539 (LIST…CVIL). The STAS domain occupies 563 to 714 (AYKNLQAKSG…SVYEAMTFAE (152 aa)).

This sequence belongs to the SLC26A/SulP transporter (TC 2.A.53) family. Post-translationally, N-glycosylated.

It localises to the cell membrane. The protein resides in the apical cell membrane. It catalyses the reaction oxalate(in) + sulfate(out) = oxalate(out) + sulfate(in). It carries out the reaction sulfate(out) + 2 chloride(in) = sulfate(in) + 2 chloride(out). The catalysed reaction is oxalate(out) + 2 chloride(in) = oxalate(in) + 2 chloride(out). The enzyme catalyses bromide(in) + chloride(out) = bromide(out) + chloride(in). It catalyses the reaction nitrate(in) + chloride(out) = nitrate(out) + chloride(in). It carries out the reaction iodide(in) + chloride(out) = iodide(out) + chloride(in). Functionally, sulfate transporter which mediates sulfate uptake into chondrocytes in order to maintain adequate sulfation of proteoglycans which is needed for cartilage development. Mediates electroneutral anion exchange of sulfate ions for oxalate ions, sulfate and oxalate ions for chloride and/or hydroxyl ions and chloride ions for bromide, iodide and nitrate ions. The coupling of sulfate transport to both hydroxyl and chloride ions likely serves to ensure transport at both acidic pH when most sulfate uptake is mediated by sulfate-hydroxide exchange and alkaline pH when most sulfate uptake is mediated by sulfate-chloride exchange. Essential for chondrocyte proliferation, differentiation and cell size expansion. The protein is Sulfate transporter (SLC26A2) of Bubalus bubalis (Domestic water buffalo).